The chain runs to 200 residues: Eukaryotic translation initiation factor isoform 4E (200 aa).

Residues M1–A22 form a disordered region. Residues Q44 to G49, K76, and W94 to E95 each bind mRNA. C99 and C138 are joined by a disulfide. Residues R145 to K150 and K189 to R192 contribute to the mRNA site.

The protein belongs to the eukaryotic initiation factor 4E family. As to quaternary structure, EIF4F is a multi-subunit complex, the composition of which varies with external and internal environmental conditions. It is composed of at least EIF4A, EIF4E and EIF4G. EIF4E is also known to interact with other partners. In higher plants two isoforms of EIF4F have been identified, named isoform EIF4F and isoform EIF(iso)4F. Isoform EIF4F has subunits p220 and p26, whereas isoform EIF(iso)4F has subunits p82 and p28. In terms of assembly, (Microbial infection) Interacts with viral genome-linked protein (VPg); this interaction is possible in susceptible hosts but impaired in resistant plants. According to the redox status, the Cys-99-Cys-138 disulfide bridge may have a role in regulating protein function by affecting its ability to bind capped mRNA. As to expression, expressed ubiquitously in seedlings, roots, leaves, sepals, petals, anthers and dehisced pollen, with highest levels in pollen, maturing anthers and roots. Strongly expressed in susceptible plants but not in resistant ones.

It localises to the cytoplasm. Its subcellular location is the nucleus. Functionally, component of the protein complex eIF4F, which is involved in the recognition of the mRNA cap, ATP-dependent unwinding of 5'-terminal secondary structure and recruitment of mRNA to the ribosome. Recognizes and binds the 7-methylguanosine-containing mRNA cap during an early step in the initiation of protein synthesis and facilitates ribosome binding by inducing the unwinding of the mRNAs secondary structures. Key component of recessive resistance to potyviruses. In terms of biological role, (Microbial infection) Susceptibility host factor required for viral infection (e.g. potato virus Y (PVY) and pepper mottle virus (PepMoV)) by recruiting viral RNAs to the host ribosomal complex via an interaction with viral genome-linked protein (VPg). This chain is Eukaryotic translation initiation factor isoform 4E, found in Nicotiana tabacum (Common tobacco).